A 221-amino-acid polypeptide reads, in one-letter code: 7-cyano-7-deazaguanine synthase (221 aa).

10-20 serves as a coordination point for ATP; it reads FSGGQDSTTCL. Zn(2+)-binding residues include C186, C195, C198, and C201.

Belongs to the QueC family. Homodimer. It depends on Zn(2+) as a cofactor.

It catalyses the reaction 7-carboxy-7-deazaguanine + NH4(+) + ATP = 7-cyano-7-deazaguanine + ADP + phosphate + H2O + H(+). It functions in the pathway purine metabolism; 7-cyano-7-deazaguanine biosynthesis. In terms of biological role, catalyzes the ATP-dependent conversion of 7-carboxy-7-deazaguanine (CDG) to 7-cyano-7-deazaguanine (preQ(0)). The chain is 7-cyano-7-deazaguanine synthase from Geobacillus kaustophilus (strain HTA426).